We begin with the raw amino-acid sequence, 523 residues long: 2-isopropylmalate synthase (523 aa).

Residues 5–267 form the Pyruvate carboxyltransferase domain; the sequence is VIIFDTTLRD…HTNINHHEIW (263 aa). Residues D14, H202, H204, and N238 each contribute to the Mn(2+) site. Positions 392 to 523 are regulatory domain; it reads RLDYFSVQSG…QNKENNKETV (132 aa).

Belongs to the alpha-IPM synthase/homocitrate synthase family. LeuA type 1 subfamily. Homodimer. Mn(2+) is required as a cofactor.

It localises to the cytoplasm. The catalysed reaction is 3-methyl-2-oxobutanoate + acetyl-CoA + H2O = (2S)-2-isopropylmalate + CoA + H(+). Its pathway is amino-acid biosynthesis; L-leucine biosynthesis; L-leucine from 3-methyl-2-oxobutanoate: step 1/4. Functionally, catalyzes the condensation of the acetyl group of acetyl-CoA with 3-methyl-2-oxobutanoate (2-ketoisovalerate) to form 3-carboxy-3-hydroxy-4-methylpentanoate (2-isopropylmalate). This Salmonella agona (strain SL483) protein is 2-isopropylmalate synthase.